A 429-amino-acid chain; its full sequence is High mobility group nucleosome-binding domain-containing protein 5 (429 aa).

The segment at 1-429 is disordered; the sequence is MPKRKAAGDA…GEKGEPVSTV (429 aa). At T29 the chain carries Phosphothreonine. Residues 35 to 44 show a composition bias toward basic residues; it reads KRASTSRKTK. A Glycyl lysine isopeptide (Lys-Gly) (interchain with G-Cter in SUMO2) cross-link involves residue K64. Position 90 is a phosphoserine (S90). Basic and acidic residues-rich tracts occupy residues 92–101 and 109–124; these read METEEVKEQI and GGEK…KNDE. Residue K98 forms a Glycyl lysine isopeptide (Lys-Gly) (interchain with G-Cter in SUMO1); alternate linkage. K98 is covalently cross-linked (Glycyl lysine isopeptide (Lys-Gly) (interchain with G-Cter in SUMO2); alternate). K121 is covalently cross-linked (Glycyl lysine isopeptide (Lys-Gly) (interchain with G-Cter in SUMO2)). A compositionally biased stretch (acidic residues) spans 133–152; sequence EKDEDEKEHEDTGEEGEDGE. Basic and acidic residues predominate over residues 153 to 195; sequence REGGLKEKPDVAEIEDAKEAKDDEEKEDKEKEDDKGGDGKKEE. A compositionally biased stretch (acidic residues) spans 196-209; it reads EKDDEGEAETEEEV. Composition is skewed to basic and acidic residues over residues 210–387 and 413–429; these read KEQQ…NEDR and NKDF…VSTV.

Belongs to the HMGN family. As to expression, expressed in trophoblast giant cells.

It is found in the nucleus. Its function is as follows. Preferentially binds to euchromatin and modulates cellular transcription by counteracting linker histone-mediated chromatin compaction. This is High mobility group nucleosome-binding domain-containing protein 5 from Rattus norvegicus (Rat).